Reading from the N-terminus, the 1438-residue chain is DNA polymerase III PolC-type (1438 aa).

The Exonuclease domain maps to 422–578 (YVVFDVETTG…YDTESTAYIF (157 aa)).

The protein belongs to the DNA polymerase type-C family. PolC subfamily.

The protein resides in the cytoplasm. The catalysed reaction is DNA(n) + a 2'-deoxyribonucleoside 5'-triphosphate = DNA(n+1) + diphosphate. Its function is as follows. Required for replicative DNA synthesis. This DNA polymerase also exhibits 3' to 5' exonuclease activity. The chain is DNA polymerase III PolC-type from Staphylococcus haemolyticus (strain JCSC1435).